The primary structure comprises 149 residues: Arginine regulator (149 aa).

The protein belongs to the ArgR family.

It is found in the cytoplasm. The protein operates within amino-acid degradation; L-arginine degradation via ADI pathway. Regulates the transcription of the arc operon, involved in arginine catabolism. The polypeptide is Arginine regulator (argR1) (Bacillus cereus (strain ATCC 14579 / DSM 31 / CCUG 7414 / JCM 2152 / NBRC 15305 / NCIMB 9373 / NCTC 2599 / NRRL B-3711)).